The primary structure comprises 264 residues: S-adenosylmethionine decarboxylase proenzyme (264 aa).

The active-site Schiff-base intermediate with substrate; via pyruvic acid is the Ser112. The residue at position 112 (Ser112) is a Pyruvic acid (Ser); by autocatalysis. His117 acts as the Proton acceptor; for processing activity in catalysis. The Proton donor; for catalytic activity role is filled by Cys140.

The protein belongs to the prokaryotic AdoMetDC family. Type 2 subfamily. In terms of assembly, heterooctamer of four alpha and four beta chains arranged as a tetramer of alpha/beta heterodimers. Pyruvate serves as cofactor. In terms of processing, is synthesized initially as an inactive proenzyme. Formation of the active enzyme involves a self-maturation process in which the active site pyruvoyl group is generated from an internal serine residue via an autocatalytic post-translational modification. Two non-identical subunits are generated from the proenzyme in this reaction, and the pyruvate is formed at the N-terminus of the alpha chain, which is derived from the carboxyl end of the proenzyme. The post-translation cleavage follows an unusual pathway, termed non-hydrolytic serinolysis, in which the side chain hydroxyl group of the serine supplies its oxygen atom to form the C-terminus of the beta chain, while the remainder of the serine residue undergoes an oxidative deamination to produce ammonia and the pyruvoyl group blocking the N-terminus of the alpha chain.

It carries out the reaction S-adenosyl-L-methionine + H(+) = S-adenosyl 3-(methylsulfanyl)propylamine + CO2. Its pathway is amine and polyamine biosynthesis; S-adenosylmethioninamine biosynthesis; S-adenosylmethioninamine from S-adenosyl-L-methionine: step 1/1. In terms of biological role, catalyzes the decarboxylation of S-adenosylmethionine to S-adenosylmethioninamine (dcAdoMet), the propylamine donor required for the synthesis of the polyamines spermine and spermidine from the diamine putrescine. The sequence is that of S-adenosylmethionine decarboxylase proenzyme from Cronobacter sakazakii (strain ATCC BAA-894) (Enterobacter sakazakii).